Consider the following 445-residue polypeptide: 2-oxoisovalerate dehydrogenase subunit alpha, mitochondrial (445 aa).

The N-terminal 45 residues, 1-45, are a transit peptide targeting the mitochondrion; the sequence is MAVAIAAARVWRPNRGLSQAALLLLWRPGARGLARSHPHRQQQQF. Tyrosine 158 and arginine 159 together coordinate thiamine diphosphate. Residue serine 206 participates in K(+) binding. Serine 207 contributes to the thiamine diphosphate binding site. Residues proline 208, threonine 211, and glutamine 212 each contribute to the K(+) site. Position 238 (glutamate 238) interacts with Mg(2+). Thiamine diphosphate-binding residues include glycine 239, alanine 240, and arginine 265. Residues asparagine 267 and tyrosine 269 each contribute to the Mg(2+) site. Histidine 336 serves as a coordination point for thiamine diphosphate. Residue serine 337 is modified to Phosphoserine; by BCKDK. Threonine 338 is modified (phosphothreonine). Phosphoserine is present on residues serine 339 and serine 347. The residue at position 356 (lysine 356) is an N6-acetyllysine; alternate. The residue at position 356 (lysine 356) is an N6-succinyllysine; alternate. Lysine 380 carries the N6-succinyllysine modification.

It belongs to the BCKDHA family. Heterotetramer of 2 alpha/BCKDHA and 2 beta chains/BCKDHB that forms the branched-chain alpha-keto acid decarboxylase (E1) component of the BCKD complex. The branched-chain alpha-ketoacid dehydrogenase is a large complex composed of three major building blocks E1, E2 and E3. It is organized around E2, a 24-meric cubic core composed of DBT, to which are associated 6 to 12 copies of E1, and approximately 6 copies of the dehydrogenase E3, a DLD dimer. Interacts with PPM1K. It depends on thiamine diphosphate as a cofactor. Requires Mg(2+) as cofactor. Post-translationally, phosphorylated at Ser-337 by BCKDK and dephosphorylated by protein phosphatase PPM1K.

Its subcellular location is the mitochondrion matrix. The enzyme catalyses N(6)-[(R)-lipoyl]-L-lysyl-[protein] + 3-methyl-2-oxobutanoate + H(+) = N(6)-[(R)-S(8)-2-methylpropanoyldihydrolipoyl]-L-lysyl-[protein] + CO2. In terms of biological role, together with BCKDHB forms the heterotetrameric E1 subunit of the mitochondrial branched-chain alpha-ketoacid dehydrogenase (BCKD) complex. The BCKD complex catalyzes the multi-step oxidative decarboxylation of alpha-ketoacids derived from the branched-chain amino-acids valine, leucine and isoleucine producing CO2 and acyl-CoA which is subsequently utilized to produce energy. The E1 subunit catalyzes the first step with the decarboxylation of the alpha-ketoacid forming an enzyme-product intermediate. A reductive acylation mediated by the lipoylamide cofactor of E2 extracts the acyl group from the E1 active site for the next step of the reaction. This chain is 2-oxoisovalerate dehydrogenase subunit alpha, mitochondrial (BCKDHA), found in Macaca fascicularis (Crab-eating macaque).